The sequence spans 468 residues: Interleukin-6 receptor subunit alpha (468 aa).

The first 19 residues, 1–19 (MLAVGCALLAALLAAPGAA), serve as a signal peptide directing secretion. Residues 20 to 365 (LAPRRCPAQE…VQDSSSVPLP (346 aa)) lie on the Extracellular side of the membrane. 4 disulfide bridges follow: C25–C193, C47–C96, C121–C132, and C165–C176. The Ig-like C2-type domain maps to 26–112 (PAQEVARGVL…AGTVHLLVDV (87 aa)). Residues N55 and N93 are each glycosylated (N-linked (GlcNAc...) asparagine). Fibronectin type-III domains follow at residues 113-217 (PPEE…LQPD) and 218-316 (PPAN…TPWT). Residues N221 and N245 are each glycosylated (N-linked (GlcNAc...) asparagine). The WSXWS motif signature appears at 303 to 307 (WSEWS). The segment at 303 to 328 (WSEWSPEAMGTPWTESRSPPAENEVS) is disordered. N-linked (GlcNAc...) asparagine glycosylation occurs at N350. Residue T352 is glycosylated (O-linked (GlcNAc) threonine). Residues 366–386 (TFLVAGGSLAFGTLLCIAIVL) form a helical membrane-spanning segment. Residues 387 to 468 (RFKKTWKLRA…ISNTDYFFPR (82 aa)) lie on the Cytoplasmic side of the membrane. Residues 421-433 (TPVLVPLISPPVS) are compositionally biased toward pro residues. The interval 421 to 468 (TPVLVPLISPPVSPSSLGSDNTSSHNRPDARDPRSPYDISNTDYFFPR) is disordered. The segment covering 446-455 (NRPDARDPRS) has biased composition (basic and acidic residues). Over residues 458 to 468 (DISNTDYFFPR) the composition is skewed to polar residues.

It belongs to the type I cytokine receptor family. Type 3 subfamily. As to quaternary structure, component of a hexamer of two molecules each of IL6, IL6R and IL6ST; first binds to IL6 to associate with the signaling subunit IL6ST. Interacts (via N-terminal ectodomain) with SORL1; this interaction may affect IL6-binding to IL6R, hence decrease IL6 'classic-signaling'. In terms of assembly, also interacts with SORL1; this interaction leads to soluble IL6R internalization. May form a trimeric complex with the soluble SORL1 ectodomain and circulating IL6 receptor; this interaction might stabilize circulating IL6, hence promote IL6 'trans-signaling,. A short soluble form is released from the membrane by proteolysis. The sIL6R is formed mostly by limited proteolysis of membrane-bound receptors, a process referred to as ectodomain shedding, but is also directly secreted from the cells after alternative mRNA splicing. mIL6R is cleaved by the proteases ADAM10 and ADAM17. Post-translationally, glycosylated. Glycosylation is dispensable for transport, signaling, and cell-surface turnover. Glycosylation at Asn-55 is a protease-regulatory exosite. Glycosylation is required for ADAM17-mediated proteolysis. In terms of tissue distribution, expressed in peripheral blood mononuclear cells and weakly found in urine and serum. 1%-20% of the total sIL6R in plasma is generated by alternative splicing.

Its subcellular location is the cell membrane. It is found in the secreted. Classic and trans-signaling are both inhibited by tocilizumab, a humanized monoclonal antibody that blocks interleukin IL6R signaling. Functionally, part of the receptor for interleukin 6. Binds to IL6 with low affinity, but does not transduce a signal. Signal activation necessitate an association with IL6ST. Activation leads to the regulation of the immune response, acute-phase reactions and hematopoiesis. The interaction with membrane-bound IL6R and IL6ST stimulates 'classic signaling', the restricted expression of the IL6R limits classic IL6 signaling to only a few tissues such as the liver and some cells of the immune system. Whereas the binding of IL6 and soluble IL6R to IL6ST stimulates 'trans-signaling'. Alternatively, 'cluster signaling' occurs when membrane-bound IL6:IL6R complexes on transmitter cells activate IL6ST receptors on neighboring receiver cells. Its function is as follows. Signaling via the membrane-bound IL6R is mostly regenerative and anti-inflammatory. Drives naive CD4(+) T cells to the Th17 lineage, through 'cluster signaling' by dendritic cells. In terms of biological role, soluble form of IL6 receptor (sIL6R) that acts as an agonist of IL6 activity. The IL6:sIL6R complex (hyper-IL6) binds to IL6ST/gp130 on cell surfaces and induces signaling also on cells that do not express membrane-bound IL6R in a process called IL6 'trans-signaling'. sIL6R is causative for the pro-inflammatory properties of IL6 and an important player in the development of chronic inflammatory diseases. In complex with IL6, is required for induction of VEGF production. Plays a protective role during liver injury, being required for maintenance of tissue regeneration. 'Trans-signaling' in central nervous system regulates energy and glucose homeostasis. The chain is Interleukin-6 receptor subunit alpha from Homo sapiens (Human).